The primary structure comprises 283 residues: MILYIATPYGFCSGVKKSISLAEKVLSNEGEVYTLGALVHNPKVIEELSKKGIKILEKNGFVEGKALIVRAHGLPQRDIEFYRTLGNRVYDATCPLVKKVQILAEYLNKNKYKVVIIGEKNHPEVIGILSYTDDQGIVVENEDDIKKIENYPKIGIVFQTTQSLDNALQKVNLIMEKGKEIRIFNTICPETIERQEKAKKLSEMVDLALVLGGKNSANTRRLYITLSKKIPTYHIENIEEIDKSWFKEDNKVGIITGTSTPNDFVEEVVELLKSLYPLEIHLV.

Cysteine 12 is a [4Fe-4S] cluster binding site. Positions 40 and 72 each coordinate (2E)-4-hydroxy-3-methylbut-2-enyl diphosphate. Histidine 40 and histidine 72 together coordinate dimethylallyl diphosphate. Isopentenyl diphosphate-binding residues include histidine 40 and histidine 72. Cysteine 94 contributes to the [4Fe-4S] cluster binding site. Histidine 122 is a binding site for (2E)-4-hydroxy-3-methylbut-2-enyl diphosphate. Histidine 122 provides a ligand contact to dimethylallyl diphosphate. Position 122 (histidine 122) interacts with isopentenyl diphosphate. The active-site Proton donor is glutamate 124. Threonine 160 lines the (2E)-4-hydroxy-3-methylbut-2-enyl diphosphate pocket. Cysteine 188 is a [4Fe-4S] cluster binding site. 3 residues coordinate (2E)-4-hydroxy-3-methylbut-2-enyl diphosphate: serine 216, asparagine 218, and serine 259. Residues serine 216, asparagine 218, and serine 259 each contribute to the dimethylallyl diphosphate site. 3 residues coordinate isopentenyl diphosphate: serine 216, asparagine 218, and serine 259.

It belongs to the IspH family. Requires [4Fe-4S] cluster as cofactor.

The catalysed reaction is isopentenyl diphosphate + 2 oxidized [2Fe-2S]-[ferredoxin] + H2O = (2E)-4-hydroxy-3-methylbut-2-enyl diphosphate + 2 reduced [2Fe-2S]-[ferredoxin] + 2 H(+). It catalyses the reaction dimethylallyl diphosphate + 2 oxidized [2Fe-2S]-[ferredoxin] + H2O = (2E)-4-hydroxy-3-methylbut-2-enyl diphosphate + 2 reduced [2Fe-2S]-[ferredoxin] + 2 H(+). The protein operates within isoprenoid biosynthesis; dimethylallyl diphosphate biosynthesis; dimethylallyl diphosphate from (2E)-4-hydroxy-3-methylbutenyl diphosphate: step 1/1. It functions in the pathway isoprenoid biosynthesis; isopentenyl diphosphate biosynthesis via DXP pathway; isopentenyl diphosphate from 1-deoxy-D-xylulose 5-phosphate: step 6/6. Functionally, catalyzes the conversion of 1-hydroxy-2-methyl-2-(E)-butenyl 4-diphosphate (HMBPP) into a mixture of isopentenyl diphosphate (IPP) and dimethylallyl diphosphate (DMAPP). Acts in the terminal step of the DOXP/MEP pathway for isoprenoid precursor biosynthesis. The sequence is that of 4-hydroxy-3-methylbut-2-enyl diphosphate reductase from Dictyoglomus thermophilum (strain ATCC 35947 / DSM 3960 / H-6-12).